Reading from the N-terminus, the 160-residue chain is Nascent polypeptide-associated complex subunit beta (160 aa).

Disordered stretches follow at residues 16 to 36 and 118 to 160; these read GGKG…GTDD and ESYQ…TEVE. Residues 20-30 are compositionally biased toward basic residues; that stretch reads TPRRKVKKVHK. Residues 33 to 98 form the NAC-A/B domain; it reads GTDDKKLQTA…GEDKELTELV (66 aa). A compositionally biased stretch (basic and acidic residues) spans 124–134; that stretch reads QKEKGEDGDKK. A compositionally biased stretch (acidic residues) spans 135-145; it reads DDDDEDDDDIP.

Belongs to the NAC-beta family. As to quaternary structure, part of the nascent polypeptide-associated complex (NAC), consisting of EGD2 and EGD1. NAC associates with ribosomes via EGD1.

Its subcellular location is the cytoplasm. It is found in the nucleus. Component of the nascent polypeptide-associated complex (NAC), a dynamic component of the ribosomal exit tunnel, protecting the emerging polypeptides from interaction with other cytoplasmic proteins to ensure appropriate nascent protein targeting. The NAC complex also promotes mitochondrial protein import by enhancing productive ribosome interactions with the outer mitochondrial membrane and blocks the inappropriate interaction of ribosomes translating non-secretory nascent polypeptides with translocation sites in the membrane of the endoplasmic reticulum. EGD1 may act as a transcription factor that exert a negative effect on the expression of several genes that are transcribed by RNA polymerase II. This chain is Nascent polypeptide-associated complex subunit beta (EGD1), found in Phaeosphaeria nodorum (strain SN15 / ATCC MYA-4574 / FGSC 10173) (Glume blotch fungus).